Reading from the N-terminus, the 74-residue chain is Protein SlyX homolog (74 aa).

It belongs to the SlyX family.

In Neisseria meningitidis serogroup C (strain 053442), this protein is Protein SlyX homolog.